The chain runs to 603 residues: NADH-ubiquinone oxidoreductase chain 5 (603 aa).

A run of 16 helical transmembrane segments spans residues 4 to 24 (YTTMAILTLTSLIPPITATLI), 36 to 56 (VKMTIASTFMISLFPTMMFMC), 87 to 107 (MMFIPIALFVTWSIMEFSLWY), 114 to 134 (INQFFKYLLIFLTTMLILVTA), 137 to 157 (LFQLFIGWEGVGIMSFLLIGW), 171 to 191 (AILYNRIGDIGFILALAWFLL), 200 to 220 (QMILLNSNPNFLPLAGLLLAA), 241 to 261 (TPVSALLHSSTMVVAGVFLLI), 272 to 292 (LIQTLTLCLGAITTLFTAICA), 301 to 320 (IVAFSTSSQLGLMVVTIGIN), 325 to 347 (AFLHICTHAFFKAMLFMCSGSII), 366 to 386 (LPLTSTSLTIGSLALTGMPFL), 407 to 429 (WALSTTLIATSLTSAYSTRMILL), 457 to 477 (LTIGSLLAGFLIINSIPPTSP), 482 to 502 (IPLYLKLTALSITLLGFLTAF), and 583 to 603 (MIKLYSLSLLIPLSLTLLLIM).

The protein belongs to the complex I subunit 5 family. Core subunit of respiratory chain NADH dehydrogenase (Complex I) which is composed of 45 different subunits.

It is found in the mitochondrion inner membrane. It catalyses the reaction a ubiquinone + NADH + 5 H(+)(in) = a ubiquinol + NAD(+) + 4 H(+)(out). Core subunit of the mitochondrial membrane respiratory chain NADH dehydrogenase (Complex I) which catalyzes electron transfer from NADH through the respiratory chain, using ubiquinone as an electron acceptor. Essential for the catalytic activity and assembly of complex I. This Hylobates lar (Lar gibbon) protein is NADH-ubiquinone oxidoreductase chain 5 (MT-ND5).